The sequence spans 571 residues: Urease subunit alpha (571 aa).

In terms of domain architecture, Urease spans 133–571; that stretch reads GGIDTHVHFI…LPLTQRYFLF (439 aa). Positions 138, 140, and 221 each coordinate Ni(2+). Position 221 is an N6-carboxylysine (Lys221). His223 is a binding site for substrate. His250 and His276 together coordinate Ni(2+). The active-site Proton donor is the His324. Asp364 is a Ni(2+) binding site.

This sequence belongs to the metallo-dependent hydrolases superfamily. Urease alpha subunit family. In terms of assembly, heterotrimer of UreA (gamma), UreB (beta) and UreC (alpha) subunits. Three heterotrimers associate to form the active enzyme. Ni cation serves as cofactor. Post-translationally, carboxylation allows a single lysine to coordinate two nickel ions.

The protein resides in the cytoplasm. The enzyme catalyses urea + 2 H2O + H(+) = hydrogencarbonate + 2 NH4(+). The protein operates within nitrogen metabolism; urea degradation; CO(2) and NH(3) from urea (urease route): step 1/1. This is Urease subunit alpha from Staphylococcus epidermidis (strain ATCC 35984 / DSM 28319 / BCRC 17069 / CCUG 31568 / BM 3577 / RP62A).